Consider the following 259-residue polypeptide: Global transcriptional regulator CodY (259 aa).

The GAF domain stretch occupies residues 1–155; that stretch reads MNLLAKTRKL…GATVVGMEIL (155 aa). A DNA-binding region (H-T-H motif) is located at residues 203–222; that stretch reads ASKIADRVGITRSVIVNALR.

The protein belongs to the CodY family.

It is found in the cytoplasm. Its function is as follows. DNA-binding global transcriptional regulator which is involved in the adaptive response to starvation and acts by directly or indirectly controlling the expression of numerous genes in response to nutrient availability. During rapid exponential growth, CodY is highly active and represses genes whose products allow adaptation to nutrient depletion. This Exiguobacterium sibiricum (strain DSM 17290 / CCUG 55495 / CIP 109462 / JCM 13490 / 255-15) protein is Global transcriptional regulator CodY.